We begin with the raw amino-acid sequence, 63 residues long: Beta-defensin 38 (63 aa).

A signal peptide spans 1-21 (MKISCFLLLILSLYFFQINQA). Intrachain disulfides connect cysteine 29–cysteine 58, cysteine 36–cysteine 51, and cysteine 41–cysteine 59.

Belongs to the beta-defensin family. In terms of tissue distribution, only expressed in epididymis (caput, corpus and cauda).

It is found in the secreted. In terms of biological role, synthetic Defb38 kills both Gram-negative (E.coli and P.aeruginosa) and Gram-positive (E.faecium) bacteria. The sequence is that of Beta-defensin 38 (Defb38) from Mus musculus (Mouse).